Here is a 346-residue protein sequence, read N- to C-terminus: Lipooligosaccharide heptosyltransferase 2 (346 aa).

It belongs to the glycosyltransferase 9 family.

It catalyses the reaction an L-alpha-D-Hep-(1-&gt;5)-[alpha-Kdo-(2-&gt;4)]-alpha-Kdo-(2-&gt;6)-lipid A + ADP-L-glycero-beta-D-manno-heptose = an L-alpha-D-Hep-(1-&gt;3)-L-alpha-D-Hep-(1-&gt;5)-[alpha-Kdo-(2-&gt;4)]-alpha-Kdo-(2-&gt;6)-lipid A + ADP + H(+). It participates in bacterial outer membrane biogenesis; LOS core biosynthesis. In terms of biological role, glycosyltransferase involved in the biosynthesis of the core oligosaccharide region of lipooligosaccharide (LOS). Catalyzes the addition of a heptose unit to the heptosyl-Kdo2-lipid A module. The chain is Lipooligosaccharide heptosyltransferase 2 (waaF) from Haemophilus influenzae (strain ATCC 51907 / DSM 11121 / KW20 / Rd).